Here is an 829-residue protein sequence, read N- to C-terminus: Periplasmic nitrate reductase (829 aa).

Residues 1 to 27 (MNRRDFMKANAVIAAASAAGLALPAGA) constitute a signal peptide (tat-type signal). Residues 39-95 (LEWNKAPCRFCGTGCSVMVATREGKVVATHGDANSEVNRGLSCIKGYFLSKIMYGRD) form the 4Fe-4S Mo/W bis-MGD-type domain. [4Fe-4S] cluster contacts are provided by Cys-46, Cys-49, Cys-53, and Cys-81. Mo-bis(molybdopterin guanine dinucleotide) contacts are provided by residues Lys-83, Gln-150, Asn-175, Cys-179, 212-219 (WGSNMAEM), 243-247 (STFEH), 262-264 (QTD), Met-373, Gln-377, Asn-483, 509-510 (SD), Lys-532, Asp-559, and 719-728 (TGRVLEHWHS). Residue Trp-795 participates in substrate binding. Asn-803 and Lys-820 together coordinate Mo-bis(molybdopterin guanine dinucleotide).

It belongs to the prokaryotic molybdopterin-containing oxidoreductase family. NasA/NapA/NarB subfamily. Component of the periplasmic nitrate reductase NapAB complex composed of NapA and NapB. It depends on [4Fe-4S] cluster as a cofactor. The cofactor is Mo-bis(molybdopterin guanine dinucleotide). Post-translationally, predicted to be exported by the Tat system. The position of the signal peptide cleavage has not been experimentally proven.

The protein localises to the periplasm. The catalysed reaction is 2 Fe(II)-[cytochrome] + nitrate + 2 H(+) = 2 Fe(III)-[cytochrome] + nitrite + H2O. In terms of biological role, catalytic subunit of the periplasmic nitrate reductase complex NapAB. Receives electrons from NapB and catalyzes the reduction of nitrate to nitrite. This Shewanella denitrificans (strain OS217 / ATCC BAA-1090 / DSM 15013) protein is Periplasmic nitrate reductase.